Consider the following 267-residue polypeptide: Probable ribosomal RNA small subunit methyltransferase A (267 aa).

5 residues coordinate S-adenosyl-L-methionine: leucine 12, glycine 37, glutamate 58, aspartate 83, and asparagine 100.

It belongs to the class I-like SAM-binding methyltransferase superfamily. rRNA adenine N(6)-methyltransferase family. RsmA subfamily.

The protein localises to the cytoplasm. Specifically dimethylates two adjacent adenosines in the loop of a conserved hairpin near the 3'-end of 16S rRNA in the 30S particle. May play a critical role in biogenesis of 30S subunits. This is Probable ribosomal RNA small subunit methyltransferase A from Methanococcus vannielii (strain ATCC 35089 / DSM 1224 / JCM 13029 / OCM 148 / SB).